The chain runs to 142 residues: Protein spalt-accessory (142 aa).

An N-terminal signal peptide occupies residues 1–16 (MKLLIALFALVTAVNA). The segment at 75–142 (GFAGQGSPNQ…HHEHHGHHRH (68 aa)) is disordered. A compositionally biased stretch (basic and acidic residues) spans 107-124 (GHFHENPHEYPEHHGDHH). Residues 125-142 (REHHEHHGHHEHHGHHRH) show a composition bias toward basic residues.

It localises to the secreted. In terms of biological role, likely to be involved in the establishment of the head. This chain is Protein spalt-accessory (sala), found in Drosophila melanogaster (Fruit fly).